Reading from the N-terminus, the 566-residue chain is Oxygen-dependent choline dehydrogenase (566 aa).

FAD is bound at residue 7–36 (DYIICGAGSAGNVLATRLTEDPDVTVLLLE). The tract at residues 180–202 (NGYQQEGFGPMDRTVTPKGRRAS) is disordered. His474 acts as the Proton acceptor in catalysis.

The protein belongs to the GMC oxidoreductase family. It depends on FAD as a cofactor.

The enzyme catalyses choline + A = betaine aldehyde + AH2. It carries out the reaction betaine aldehyde + NAD(+) + H2O = glycine betaine + NADH + 2 H(+). Its pathway is amine and polyamine biosynthesis; betaine biosynthesis via choline pathway; betaine aldehyde from choline (cytochrome c reductase route): step 1/1. Its function is as follows. Involved in the biosynthesis of the osmoprotectant glycine betaine. Catalyzes the oxidation of choline to betaine aldehyde and betaine aldehyde to glycine betaine at the same rate. This Burkholderia orbicola (strain MC0-3) protein is Oxygen-dependent choline dehydrogenase.